The sequence spans 312 residues: Olfactory receptor 13J1 (312 aa).

The Extracellular segment spans residues 1 to 25; the sequence is MEPLNRTEVSEFFLKGFSGYPALEH. The N-linked (GlcNAc...) asparagine glycan is linked to Asn5. A helical transmembrane segment spans residues 26-46; the sequence is LLFPLCSAMYLVTLLGNTAIM. The Cytoplasmic portion of the chain corresponds to 47–54; the sequence is AVSVLDIH. Residues 55-75 form a helical membrane-spanning segment; the sequence is LHTPVYFFLGNLSTLDICYTP. Over 76–99 the chain is Extracellular; sequence TFVPLMLVHLLSSRKTISFAVCAI. A disulfide bridge connects residues Cys97 and Cys189. The chain crosses the membrane as a helical span at residues 100 to 120; it reads QMCLSLSTGSTECLLLAITAY. Residues 121–139 are Cytoplasmic-facing; that stretch reads DRYLAICQPLRYHVLMSHR. Residues 140-160 traverse the membrane as a helical segment; that stretch reads LCVLLMGAAWVLCLLKSVTEM. The Extracellular portion of the chain corresponds to 161–197; it reads VISMRLPFCGHHVVSHFTCKILAVLKLACGNTSVSED. Asn191 carries an N-linked (GlcNAc...) asparagine glycan. A helical transmembrane segment spans residues 198 to 217; that stretch reads FLLAGSILLLPVPLAFICLS. The Cytoplasmic portion of the chain corresponds to 218 to 237; sequence YLLILATILRVPSAARCCKA. A helical transmembrane segment spans residues 238-258; that stretch reads FSTCLAHLAVVLLFYGTIIFM. Over 259-271 the chain is Extracellular; sequence YLKPKSKEAHISD. A helical membrane pass occupies residues 272–292; the sequence is EVFTVLYAMVTTMLNPTIYSL. At 293–312 the chain is on the cytoplasmic side; it reads RNKEVKEAARKVWGRSRASR.

The protein belongs to the G-protein coupled receptor 1 family.

It is found in the cell membrane. Its function is as follows. Odorant receptor. The protein is Olfactory receptor 13J1 (OR13J1) of Homo sapiens (Human).